The following is a 401-amino-acid chain: Argininosuccinate synthase (401 aa).

8–16 (AYSGGLDTS) contributes to the ATP binding site. An L-citrulline-binding site is contributed by Y85. G115 is a binding site for ATP. Residues T117, N121, and D122 each coordinate L-aspartate. Position 121 (N121) interacts with L-citrulline. The L-citrulline site is built by R125, S173, E258, and Y270.

This sequence belongs to the argininosuccinate synthase family. Type 1 subfamily. As to quaternary structure, homotetramer.

The protein resides in the cytoplasm. The catalysed reaction is L-citrulline + L-aspartate + ATP = 2-(N(omega)-L-arginino)succinate + AMP + diphosphate + H(+). It participates in amino-acid biosynthesis; L-arginine biosynthesis; L-arginine from L-ornithine and carbamoyl phosphate: step 2/3. This is Argininosuccinate synthase from Staphylococcus aureus (strain Mu3 / ATCC 700698).